We begin with the raw amino-acid sequence, 159 residues long: Phosphopantetheine adenylyltransferase (159 aa).

Residue Thr8 coordinates substrate. ATP-binding positions include 8 to 9 (TF) and His16. Substrate-binding residues include Lys40, Thr72, and Arg86. ATP-binding positions include 87 to 89 (GLR), Glu97, and 122 to 128 (YSFLSSS).

The protein belongs to the bacterial CoaD family. In terms of assembly, homohexamer. Mg(2+) is required as a cofactor.

It is found in the cytoplasm. It carries out the reaction (R)-4'-phosphopantetheine + ATP + H(+) = 3'-dephospho-CoA + diphosphate. It functions in the pathway cofactor biosynthesis; coenzyme A biosynthesis; CoA from (R)-pantothenate: step 4/5. Its function is as follows. Reversibly transfers an adenylyl group from ATP to 4'-phosphopantetheine, yielding dephospho-CoA (dPCoA) and pyrophosphate. This chain is Phosphopantetheine adenylyltransferase, found in Prochlorococcus marinus subsp. pastoris (strain CCMP1986 / NIES-2087 / MED4).